The sequence spans 942 residues: Inter-alpha-trypsin inhibitor heavy chain H5 (942 aa).

The signal sequence occupies residues 1-16; the sequence is MLLLLGLCLGLSLCVG. The VIT domain occupies 35–161; the sequence is VPRQVRLLQR…KAAFFLSYEE (127 aa). 2 N-linked (GlcNAc...) asparagine glycosylation sites follow: Asn-97 and Asn-127. Disordered regions lie at residues 116 to 136 and 208 to 227; these read KKSGDRVKEKRNKTTEENGEK and SRQRGSGRGEDDSGPPPSTV. 3 N-linked (GlcNAc...) asparagine glycosylation sites follow: Asn-231, Asn-421, and Asn-508. Positions 295 to 478 constitute a VWFA domain; that stretch reads NVVFVLDSSA…SQLIGFYDEI (184 aa). The interval 550–571 is disordered; sequence QKAGKDVTGSPRPGGDGEGDTN. Asn-776, Asn-795, and Asn-862 each carry an N-linked (GlcNAc...) asparagine glycan.

The protein belongs to the ITIH family. In terms of tissue distribution, abundantly expressed in placenta. Less abundant expression in mammary gland and ovary. Expression is barely detectable levels in all other tissues tested.

It is found in the secreted. Functionally, may act as a tumor suppressor. The chain is Inter-alpha-trypsin inhibitor heavy chain H5 (ITIH5) from Homo sapiens (Human).